Consider the following 218-residue polypeptide: Grancalcin (218 aa).

4 EF-hand domains span residues 49–84 (SSAG…SGIS), 85–119 (GTYS…KELW), 120–155 (SALN…MGYR), and 156–191 (LSPQ…ALTD). The Ca(2+) site is built by Asp-103, Asp-105, Thr-107, Lys-109, Asp-133, Asp-135, Ser-137, Thr-139, and Glu-144.

Homodimer. Interacts with SRI and LCP1.

The protein resides in the cytoplasm. It is found in the cytoplasmic granule membrane. Its function is as follows. Calcium-binding protein that may play a role in the adhesion of neutrophils to fibronectin. May play a role in the formation of focal adhesions. This chain is Grancalcin (GCA), found in Pongo abelii (Sumatran orangutan).